Consider the following 219-residue polypeptide: RING finger protein nenya (219 aa).

The segment at 6-48 (CNKCFRRRNVEPTLIFHMTQCQHVLCASCLSESSTDKKCPLCK) adopts an RING-type zinc-finger fold. The interval 161–181 (NQARGLRPRTPSVTTSDNTQS) is disordered.

In terms of assembly, may interact with itself, with narya and vilya through its RING-type zinc finger.

Functionally, required for the formation of DNA double-strand breaks together with narya and vilya during the meiotic recombination process. Plays a redundant role with narya in chromosome segregation during female meiosis. The protein is RING finger protein nenya of Drosophila melanogaster (Fruit fly).